We begin with the raw amino-acid sequence, 778 residues long: Endonuclease MutS2 (778 aa).

328 to 335 (GPNTGGKT) lines the ATP pocket. The Smr domain occupies 702–777 (LDLRGKRYEE…GSGATIVTFK (76 aa)).

It belongs to the DNA mismatch repair MutS family. MutS2 subfamily. As to quaternary structure, homodimer. Binds to stalled ribosomes, contacting rRNA.

Its function is as follows. Endonuclease that is involved in the suppression of homologous recombination and thus may have a key role in the control of bacterial genetic diversity. In terms of biological role, acts as a ribosome collision sensor, splitting the ribosome into its 2 subunits. Detects stalled/collided 70S ribosomes which it binds and splits by an ATP-hydrolysis driven conformational change. Acts upstream of the ribosome quality control system (RQC), a ribosome-associated complex that mediates the extraction of incompletely synthesized nascent chains from stalled ribosomes and their subsequent degradation. Probably generates substrates for RQC. The sequence is that of Endonuclease MutS2 from Streptococcus pneumoniae (strain Hungary19A-6).